A 478-amino-acid polypeptide reads, in one-letter code: tRNA modification GTPase MnmE (478 aa).

Residues arginine 36, glutamate 94, and lysine 133 each coordinate (6S)-5-formyl-5,6,7,8-tetrahydrofolate. Positions 230–402 (GIHVVLAGRP…LVETLCAKVG (173 aa)) constitute a TrmE-type G domain. Position 240 (asparagine 240) interacts with K(+). Residues 240–245 (NAGKSS), 259–265 (TDVAGTT), and 284–287 (DTAG) contribute to the GTP site. Mg(2+) is bound at residue serine 244. K(+) contacts are provided by threonine 259, valine 261, and threonine 264. Position 265 (threonine 265) interacts with Mg(2+). Residue lysine 478 participates in (6S)-5-formyl-5,6,7,8-tetrahydrofolate binding.

This sequence belongs to the TRAFAC class TrmE-Era-EngA-EngB-Septin-like GTPase superfamily. TrmE GTPase family. In terms of assembly, homodimer. Heterotetramer of two MnmE and two MnmG subunits. Requires K(+) as cofactor.

It localises to the cytoplasm. Its function is as follows. Exhibits a very high intrinsic GTPase hydrolysis rate. Involved in the addition of a carboxymethylaminomethyl (cmnm) group at the wobble position (U34) of certain tRNAs, forming tRNA-cmnm(5)s(2)U34. This Psychrobacter cryohalolentis (strain ATCC BAA-1226 / DSM 17306 / VKM B-2378 / K5) protein is tRNA modification GTPase MnmE.